A 1611-amino-acid polypeptide reads, in one-letter code: SH3 domain-containing protein C23A1.17 (1611 aa).

Positions 3–67 (SFPTRVVALY…PKDFTEPAED (65 aa)) constitute an SH3 domain. 4 disordered regions span residues 275–648 (THPA…PTSL), 662–741 (IDPP…PPGL), 762–851 (AVPR…NSLN), and 886–1365 (TPST…FSAK). The segment covering 278 to 296 (AASSTMATESSHQSPSADS) has biased composition (polar residues). Basic and acidic residues predominate over residues 300-312 (ELSKSQRVAKDDD). Residues 316–330 (VSNTANSDEPASSSK) show a composition bias toward polar residues. Acidic residues-rich tracts occupy residues 361 to 373 (SEQE…DAES) and 387 to 420 (SEPE…QIDP). Basic and acidic residues predominate over residues 421–433 (EEAKRIALRERMA). Residues 472-494 (STTNDSSPPKDSSSTSTQPTEQS) are compositionally biased toward low complexity. Residues 576–586 (TQETSEQQVHK) are compositionally biased toward polar residues. Residues 605 to 619 (FDKETLASNEAHEAV) are compositionally biased toward basic and acidic residues. Low complexity predominate over residues 637-648 (SSSVVTPSPTSL). Polar residues-rich tracts occupy residues 799–808 (SRPSTGSQLR), 886–902 (TPST…SNVA), and 923–940 (ATHQ…QLGS). 3 stretches are compositionally biased toward pro residues: residues 963 to 974 (PAAPPSIPPPLP), 1022 to 1053 (PPVP…PPVP), and 1076 to 1241 (IPAP…PVPA). Residues 1242-1278 (PSSEAPSVSTPRSSVPSPHSNASPSPTSSSMASAAPA) show a composition bias toward low complexity. Phosphoserine is present on residues serine 1258, serine 1261, and serine 1266. The span at 1300 to 1312 (KSSKSGEHHHHHN) shows a compositional bias: basic residues. A compositionally biased stretch (polar residues) spans 1317-1327 (DSSSTRTSLAH). Low complexity predominate over residues 1340 to 1350 (RSSSRASKKPS). A compositionally biased stretch (polar residues) spans 1351 to 1362 (IVSTTGPFNESF). Serine 1379 carries the post-translational modification Phosphoserine. Threonine 1380 bears the Phosphothreonine mark.

It is found in the cytoplasm. The protein is SH3 domain-containing protein C23A1.17 of Schizosaccharomyces pombe (strain 972 / ATCC 24843) (Fission yeast).